The primary structure comprises 788 residues: Integrin beta-6 (788 aa).

The first 21 residues, 1–21, serve as a signal peptide directing secretion; that stretch reads MGIELLCLFFLCLGRNDHVQG. Positions 22 to 71 constitute a PSI domain; it reads GCAVGGAETCEDCLLIGPQCAWCSQENFTHLSGVGERCDTPANLLAKGCQ. The Extracellular portion of the chain corresponds to 22–709; the sequence is GCAVGGAETC…KDCPKPPNIP (688 aa). 19 cysteine pairs are disulfide-bonded: C23-C41, C31-C454, C34-C59, C44-C70, C197-C204, C252-C293, C394-C406, C426-C452, C456-C476, C467-C479, C481-C490, C492-C519, C502-C517, C511-C522, C524-C537, C539-C560, C544-C558, C552-C563, and C565-C574. N-linked (GlcNAc...) asparagine glycosylation is found at N48 and N97. The region spanning 131-371 is the VWFA domain; that stretch reads YPVDLYYLMD…QLIISAYEEL (241 aa). Positions 140, 142, and 144 each coordinate Mg(2+). Residues S144, D147, D148, and E179 each coordinate Ca(2+). Residues N235, D237, P239, and E240 each contribute to the Ca(2+) site. Mg(2+) is bound at residue E240. N260 is a glycosylation site (N-linked (GlcNAc...) asparagine). Residues D271 and K355 each coordinate Ca(2+). N-linked (GlcNAc...) asparagine glycosylation occurs at N387. N418 is a glycosylation site (N-linked (GlcNAc...) asparagine). 4 I-EGF domains span residues 456–491, 492–538, 539–575, and 576–615; these read CQKE…HHCE, CGED…PYCQ, CDNF…EYCN, and CTTS…PTCE. N-linked (GlcNAc...) asparagine glycosylation is found at N463 and N471. N-linked (GlcNAc...) asparagine glycosylation is present at N541. N-linked (GlcNAc...) asparagine glycosylation is present at N575. Intrachain disulfides connect C576–C599, C583–C597, C591–C602, C604–C614, C617–C620, C624–C670, C630–C649, C633–C645, and C678–C702. The helical transmembrane segment at 710 to 730 threads the bilayer; the sequence is MIMLGVSLAILLIGVVLLCIW. The tract at residues 731–758 is interaction with HAX1; sequence KLLVSFHDRKEVAKFEAERSKAKWQTGT. Topologically, residues 731 to 788 are cytoplasmic; the sequence is KLLVSFHDRKEVAKFEAERSKAKWQTGTNPLYRGSTSTFKNVTYKHKEKQKVDLSTDG.

Belongs to the integrin beta chain family. Heterodimer of an alpha and a beta subunit. Interacts with FLNB. Interacts with HAX1. ITGAV:ITGB6 interacts with FBN1. ITGAV:ITGB6 interacts with TGFB1.

It localises to the cell membrane. Its subcellular location is the cell junction. It is found in the focal adhesion. In terms of biological role, integrin alpha-V:beta-6 (ITGAV:ITGB6) is a receptor for fibronectin and cytotactin. It recognizes the sequence R-G-D in its ligands. ITGAV:ITGB6 acts as a receptor for fibrillin-1 (FBN1) and mediates R-G-D-dependent cell adhesion to FBN1. Integrin alpha-V:beta-6 (ITGAV:ITGB6) mediates R-G-D-dependent release of transforming growth factor beta-1 (TGF-beta-1) from regulatory Latency-associated peptide (LAP), thereby playing a key role in TGF-beta-1 activation. This Bos taurus (Bovine) protein is Integrin beta-6 (ITGB6).